A 795-amino-acid polypeptide reads, in one-letter code: TBC1 domain family member 5 (795 aa).

The segment covering 1 to 13 (MYHSLSETRHPLQ) has biased composition (basic and acidic residues). The disordered stretch occupies residues 1 to 49 (MYHSLSETRHPLQPEEQEVGIDPLSSYSNKSGGDSNKNGRRTSSTLDSE). The segment covering 25–49 (SSYSNKSGGDSNKNGRRTSSTLDSE) has biased composition (polar residues). Thr42 carries the post-translational modification Phosphothreonine. Ser43 and Ser44 each carry phosphoserine. The segment at 56-64 (RKEWEELFV) is required for interaction with retromer; involved in interaction with ATG8 family proteins. The short motif at 57–62 (KEWEEL) is the LIR 1 element. The 279-residue stretch at 81–359 (LRSSRFRSIC…VVWDALFADG (279 aa)) folds into the Rab-GAP TBC domain. Ser460 is subject to Phosphoserine. The disordered stretch occupies residues 475 to 564 (PGSAGGPVPG…PPSSATKKDS (90 aa)). The segment covering 484-496 (GGNSSSSSSVVIP) has biased composition (low complexity). 8 positions are modified to phosphoserine: Ser522, Ser539, Ser541, Ser544, Ser554, Ser570, Ser584, and Ser730. The segment covering 523–542 (MPVQLNKGLSSKNISSSPSV) has biased composition (polar residues). The span at 554-564 (SPPSSATKKDS) shows a compositional bias: polar residues. The interval 674 to 795 (HYCSSGQGQG…GFTIVSPLDI (122 aa)) is disordered. The segment covering 727–748 (ARGSFSGQAQPLRTLRSTSGKS) has biased composition (polar residues). Residues 765-776 (PASASSSNPSSS) show a composition bias toward low complexity. An LIR 2 motif is present at residues 785 to 789 (SGFTI). A required for interaction with ATG8 family proteins region spans residues 786-791 (GFTIVS). Ser791 carries the phosphoserine modification.

In terms of assembly, interacts with MAP1LC3A, MAP1LC3B, MAP1LC3C, GABARAP, GABARAPL1, GABARAPL2. Interacts with VPS29 and VPS35; indicative for an association with retromer CSC subcomplex. MAP1LC3A and VPS29 compete for binding to TBC1D5. Interacts with AP2M1; indicative for an association with the AP2 complex. Interacts with ULK1 and ATG13 (phosphorylated); indicative for an association with the activated ULK1-ATG13-FIP200 complex. Interacts with ATG9A; the interactions seems to be restricted to the AP2-clathrin-associated fraction of ATG9A.

Its subcellular location is the endosome membrane. The protein localises to the cytoplasmic vesicle. It localises to the autophagosome. Its function is as follows. May act as a GTPase-activating protein (GAP) for Rab family protein(s). May act as a GAP for RAB7A. Can displace RAB7A and retromer CSC subcomplex from the endosomal membrane to the cytosol; at least retromer displacement seems to require its catalytic activity. Required for retrograde transport of cargo proteins from endosomes to the trans-Golgi network (TGN); the function seems to require its catalytic activity. Involved in regulation of autophagy. May act as a molecular switch between endosomal and autophagosomal transport and is involved in reprogramming vesicle trafficking upon autophagy induction. Involved in the trafficking of ATG9A upon activation of autophagy. May regulate the recruitment of ATG9A-AP2-containing vesicles to autophagic membranes. The sequence is that of TBC1 domain family member 5 (TBC1D5) from Homo sapiens (Human).